The sequence spans 330 residues: GTPase Obg (330 aa).

The region spanning 1–159 (MNFIDEVKIC…MWIHLSLKLL (159 aa)) is the Obg domain. One can recognise an OBG-type G domain in the interval 160 to 327 (SDVGLVGLPN…IVKLALKTIK (168 aa)). GTP-binding positions include 166-173 (GLPNAGKS), 191-195 (FTTLV), 212-215 (DIPG), 279-282 (NKCD), and 308-310 (STY). The Mg(2+) site is built by S173 and T193.

The protein belongs to the TRAFAC class OBG-HflX-like GTPase superfamily. OBG GTPase family. Monomer. It depends on Mg(2+) as a cofactor.

It is found in the cytoplasm. Functionally, an essential GTPase which binds GTP, GDP and possibly (p)ppGpp with moderate affinity, with high nucleotide exchange rates and a fairly low GTP hydrolysis rate. Plays a role in control of the cell cycle, stress response, ribosome biogenesis and in those bacteria that undergo differentiation, in morphogenesis control. In Rickettsia felis (strain ATCC VR-1525 / URRWXCal2) (Rickettsia azadi), this protein is GTPase Obg.